Reading from the N-terminus, the 100-residue chain is Probable DNA-binding protein HU (100 aa).

This sequence belongs to the bacterial histone-like protein family.

Functionally, histone-like DNA-binding protein which is capable of wrapping DNA to stabilize it, and thus to prevent its denaturation under extreme environmental conditions. The chain is Probable DNA-binding protein HU (hup) from Chlamydia muridarum (strain MoPn / Nigg).